We begin with the raw amino-acid sequence, 326 residues long: Glutamine synthetase (326 aa).

Residues 4–85 (FKLEYIWLDG…VMCEVMMPDG (82 aa)) enclose the GS beta-grasp domain. In terms of domain architecture, GS catalytic spans 83 to 326 (PDGHAHASNA…GDPYQIVRRF (244 aa)). Glu107 and Glu109 together coordinate Mg(2+). Glu164 lines the ATP pocket. Residues Glu169 and Glu176 each coordinate Mg(2+). Glu275 provides a ligand contact to L-glutamate.

The protein belongs to the glutamine synthetase family. Homooctamer and homotetramer. It depends on Mg(2+) as a cofactor.

The protein resides in the cytoplasm. It catalyses the reaction L-glutamate + NH4(+) + ATP = L-glutamine + ADP + phosphate + H(+). Transferase activity is inhibited by NH(4)Cl. Its function is as follows. Catalyzes the ATP-dependent biosynthesis of glutamine from glutamate and ammonia. This chain is Glutamine synthetase, found in Rhizobium leguminosarum bv. phaseoli.